The primary structure comprises 220 residues: MAFRDQPLGELVLSIPRASALFRKYDMDYCCGGKQTLERAALRKELDVDAIEAELAQLAEQPIDKDWRTVALGEIIDHIIVRYHDRHREQLPELILQATKVERVHADKASVPRGLAKYLTMLHEELFSHMMKEEQILFPMIKQGMGSQAMGPISVMESEHDDAGELLEVIKHTTDNVTPPADACTTWKAMYNGINELIDDLMEHISLENNVLFPRALAGE.

It belongs to the RIC family. YtfE subfamily. Homodimer.

It localises to the cytoplasm. Its function is as follows. Di-iron-containing protein involved in the repair of iron-sulfur clusters damaged by oxidative and nitrosative stress conditions. The protein is Iron-sulfur cluster repair protein YtfE of Enterobacter sp. (strain 638).